A 349-amino-acid chain; its full sequence is Glycerol-1-phosphate dehydrogenase [NAD(P)+] (349 aa).

Residues 95–99 (GKSID) and 117–120 (TSPS) contribute to the NAD(+) site. A substrate-binding site is contributed by aspartate 122. Serine 126 contacts NAD(+). Aspartate 169 serves as a coordination point for substrate. Residues aspartate 169 and histidine 249 each contribute to the Zn(2+) site. Histidine 253 serves as a coordination point for substrate. Residue histidine 265 participates in Zn(2+) binding.

It belongs to the glycerol-1-phosphate dehydrogenase family. In terms of assembly, homodimer. Zn(2+) is required as a cofactor.

It is found in the cytoplasm. The catalysed reaction is sn-glycerol 1-phosphate + NAD(+) = dihydroxyacetone phosphate + NADH + H(+). It carries out the reaction sn-glycerol 1-phosphate + NADP(+) = dihydroxyacetone phosphate + NADPH + H(+). It functions in the pathway membrane lipid metabolism; glycerophospholipid metabolism. Functionally, catalyzes the NAD(P)H-dependent reduction of dihydroxyacetonephosphate (DHAP or glycerone phosphate) to glycerol 1-phosphate (G1P). The G1P thus generated is used as the glycerophosphate backbone of phospholipids in the cellular membranes of Archaea. The polypeptide is Glycerol-1-phosphate dehydrogenase [NAD(P)+] (Hyperthermus butylicus (strain DSM 5456 / JCM 9403 / PLM1-5)).